Here is a 335-residue protein sequence, read N- to C-terminus: 4-hydroxy-3-methylbut-2-enyl diphosphate reductase (335 aa).

Residue Cys-14 coordinates [4Fe-4S] cluster. Residues His-43 and His-81 each coordinate (2E)-4-hydroxy-3-methylbut-2-enyl diphosphate. His-43 and His-81 together coordinate dimethylallyl diphosphate. His-43 and His-81 together coordinate isopentenyl diphosphate. Residue Cys-103 coordinates [4Fe-4S] cluster. Residue His-132 coordinates (2E)-4-hydroxy-3-methylbut-2-enyl diphosphate. His-132 provides a ligand contact to dimethylallyl diphosphate. Residue His-132 participates in isopentenyl diphosphate binding. Glu-134 (proton donor) is an active-site residue. Residue Thr-179 participates in (2E)-4-hydroxy-3-methylbut-2-enyl diphosphate binding. Position 209 (Cys-209) interacts with [4Fe-4S] cluster. (2E)-4-hydroxy-3-methylbut-2-enyl diphosphate-binding residues include Ser-237, Ser-238, Asn-239, and Ser-285. The dimethylallyl diphosphate site is built by Ser-237, Ser-238, Asn-239, and Ser-285. Isopentenyl diphosphate contacts are provided by Ser-237, Ser-238, Asn-239, and Ser-285.

It belongs to the IspH family. [4Fe-4S] cluster is required as a cofactor.

The catalysed reaction is isopentenyl diphosphate + 2 oxidized [2Fe-2S]-[ferredoxin] + H2O = (2E)-4-hydroxy-3-methylbut-2-enyl diphosphate + 2 reduced [2Fe-2S]-[ferredoxin] + 2 H(+). It carries out the reaction dimethylallyl diphosphate + 2 oxidized [2Fe-2S]-[ferredoxin] + H2O = (2E)-4-hydroxy-3-methylbut-2-enyl diphosphate + 2 reduced [2Fe-2S]-[ferredoxin] + 2 H(+). Its pathway is isoprenoid biosynthesis; dimethylallyl diphosphate biosynthesis; dimethylallyl diphosphate from (2E)-4-hydroxy-3-methylbutenyl diphosphate: step 1/1. It functions in the pathway isoprenoid biosynthesis; isopentenyl diphosphate biosynthesis via DXP pathway; isopentenyl diphosphate from 1-deoxy-D-xylulose 5-phosphate: step 6/6. Its function is as follows. Catalyzes the conversion of 1-hydroxy-2-methyl-2-(E)-butenyl 4-diphosphate (HMBPP) into a mixture of isopentenyl diphosphate (IPP) and dimethylallyl diphosphate (DMAPP). Acts in the terminal step of the DOXP/MEP pathway for isoprenoid precursor biosynthesis. The chain is 4-hydroxy-3-methylbut-2-enyl diphosphate reductase from Deinococcus radiodurans (strain ATCC 13939 / DSM 20539 / JCM 16871 / CCUG 27074 / LMG 4051 / NBRC 15346 / NCIMB 9279 / VKM B-1422 / R1).